Consider the following 219-residue polypeptide: Thymidylate kinase (219 aa).

Residue 7 to 14 (GIDGAGKS) coordinates ATP.

The protein belongs to the thymidylate kinase family.

It catalyses the reaction dTMP + ATP = dTDP + ADP. Phosphorylation of dTMP to form dTDP in both de novo and salvage pathways of dTTP synthesis. The protein is Thymidylate kinase of Chlorobium phaeobacteroides (strain DSM 266 / SMG 266 / 2430).